A 170-amino-acid chain; its full sequence is Myosin regulatory light chain 2, skeletal muscle isoform (170 aa).

A2 is subject to N,N,N-trimethylalanine. 2 positions are modified to phosphoserine: S16 and S17. T26 and T36 each carry phosphothreonine. Residues 26–61 (TQIQEFKEAFTVIDQNRDGIIDKEDLRDTFAAMGRL) enclose the EF-hand 1 domain. Ca(2+) is bound by residues D39, N41, D43, and D50. Residue S76 is modified to Phosphoserine. 2 consecutive EF-hand domains span residues 96 to 131 (DPEDVITGAFKVLDPEGKGTIKKKFLEELLTTQCDR) and 132 to 167 (FSQEEIKNMWAAFPPDVGGNVDYKNICYVITHGDAK). T102 bears the Phosphothreonine mark.

As to quaternary structure, myosin is a hexamer of 2 heavy chains and 4 light chains.

In terms of biological role, plays a role in muscle contraction. This is Myosin regulatory light chain 2, skeletal muscle isoform from Bos taurus (Bovine).